The chain runs to 694 residues: Elongation factor G (694 aa).

Positions 8–285 constitute a tr-type G domain; that stretch reads EKVRNIGIAA…AVVELLPSPQ (278 aa). GTP-binding positions include 17–24, 81–85, and 135–138; these read AHIDAGKT, DTPGH, and NKMD.

Belongs to the TRAFAC class translation factor GTPase superfamily. Classic translation factor GTPase family. EF-G/EF-2 subfamily.

It localises to the cytoplasm. In terms of biological role, catalyzes the GTP-dependent ribosomal translocation step during translation elongation. During this step, the ribosome changes from the pre-translocational (PRE) to the post-translocational (POST) state as the newly formed A-site-bound peptidyl-tRNA and P-site-bound deacylated tRNA move to the P and E sites, respectively. Catalyzes the coordinated movement of the two tRNA molecules, the mRNA and conformational changes in the ribosome. The polypeptide is Elongation factor G (fusA) (Synechococcus sp. (strain ATCC 27144 / PCC 6301 / SAUG 1402/1) (Anacystis nidulans)).